We begin with the raw amino-acid sequence, 165 residues long: Growth arrest and DNA damage-inducible protein GADD45 alpha (165 aa).

T2 bears the Phosphothreonine mark.

The protein belongs to the GADD45 family. In terms of assembly, interacts with MAPK14. Predominantly monomeric but also forms dimers and other oligomers as concentration increases. Interacts with GADD45GIP1. Interacts weakly with PCNA. Interacts with AURKA, likely to compete with dimerization.

It localises to the nucleus. In terms of biological role, in T-cells, functions as a regulator of p38 MAPKs by inhibiting p88 phosphorylation and activity. Might affect PCNA interaction with some CDK (cell division protein kinase) complexes; stimulates DNA excision repair in vitro and inhibits entry of cells into S phase. The sequence is that of Growth arrest and DNA damage-inducible protein GADD45 alpha (GADD45A) from Homo sapiens (Human).